Consider the following 105-residue polypeptide: Large ribosomal subunit protein uL24 (105 aa).

This sequence belongs to the universal ribosomal protein uL24 family. In terms of assembly, part of the 50S ribosomal subunit.

In terms of biological role, one of two assembly initiator proteins, it binds directly to the 5'-end of the 23S rRNA, where it nucleates assembly of the 50S subunit. Functionally, one of the proteins that surrounds the polypeptide exit tunnel on the outside of the subunit. The polypeptide is Large ribosomal subunit protein uL24 (Aromatoleum aromaticum (strain DSM 19018 / LMG 30748 / EbN1) (Azoarcus sp. (strain EbN1))).